Here is a 351-residue protein sequence, read N- to C-terminus: uncharacterized protein (351 aa).

Residues Asp-215, Asp-226, His-290, Glu-319, and Glu-333 each coordinate Mn(2+).

This sequence belongs to the peptidase M24B family. Requires Mn(2+) as cofactor.

This is an uncharacterized protein from Staphylococcus epidermidis (strain ATCC 35984 / DSM 28319 / BCRC 17069 / CCUG 31568 / BM 3577 / RP62A).